Here is a 328-residue protein sequence, read N- to C-terminus: Ferredoxin--NADP reductase (328 aa).

The FAD site is built by Ser14, Glu33, Gln41, Tyr46, Ile90, and Phe126.

Belongs to the ferredoxin--NADP reductase type 2 family. As to quaternary structure, homodimer. The cofactor is FAD.

The catalysed reaction is 2 reduced [2Fe-2S]-[ferredoxin] + NADP(+) + H(+) = 2 oxidized [2Fe-2S]-[ferredoxin] + NADPH. This chain is Ferredoxin--NADP reductase, found in Mycoplasmoides gallisepticum (strain R(low / passage 15 / clone 2)) (Mycoplasma gallisepticum).